We begin with the raw amino-acid sequence, 304 residues long: Zinc carboxypeptidase (304 aa).

Residues 1–294 (QYHTLPEIYS…DSVVTILKES (294 aa)) enclose the Peptidase M14 domain. Positions 58 and 61 each coordinate Zn(2+). Cysteines 125 and 148 form a disulfide. His-184 is a Zn(2+) binding site. Glu-259 functions as the Proton donor/acceptor in the catalytic mechanism.

It belongs to the peptidase M14 family. Zn(2+) serves as cofactor. Gut specific.

The protein resides in the secreted. Its function is as follows. Involved in the digestion of the blood meal. The sequence is that of Zinc carboxypeptidase from Simulium vittatum (Striped black fly).